Reading from the N-terminus, the 108-residue chain is Large ribosomal subunit protein uL11 (108 aa).

It belongs to the universal ribosomal protein uL11 family. In terms of assembly, part of the ribosomal stalk of the 50S ribosomal subunit. Interacts with L10 and the large rRNA to form the base of the stalk. L10 forms an elongated spine to which L12 dimers bind in a sequential fashion forming a multimeric L10(L12)X complex.

Its function is as follows. Forms part of the ribosomal stalk which helps the ribosome interact with GTP-bound translation factors. The protein is Large ribosomal subunit protein uL11 (rpl11) of Aeropyrum pernix (strain ATCC 700893 / DSM 11879 / JCM 9820 / NBRC 100138 / K1).